The following is a 635-amino-acid chain: Threonine--tRNA ligase (635 aa).

Residues 1-61 enclose the TGS domain; that stretch reads MVSIRLPDGS…DHDVALAIVT (61 aa). The segment at 242-533 is catalytic; sequence DHRKLGKQLD…LIEHHAGAMP (292 aa). 3 residues coordinate Zn(2+): Cys-333, His-384, and His-510.

This sequence belongs to the class-II aminoacyl-tRNA synthetase family. As to quaternary structure, homodimer. Zn(2+) is required as a cofactor.

It is found in the cytoplasm. The enzyme catalyses tRNA(Thr) + L-threonine + ATP = L-threonyl-tRNA(Thr) + AMP + diphosphate + H(+). Catalyzes the attachment of threonine to tRNA(Thr) in a two-step reaction: L-threonine is first activated by ATP to form Thr-AMP and then transferred to the acceptor end of tRNA(Thr). Also edits incorrectly charged L-seryl-tRNA(Thr). This chain is Threonine--tRNA ligase, found in Paraburkholderia phymatum (strain DSM 17167 / CIP 108236 / LMG 21445 / STM815) (Burkholderia phymatum).